We begin with the raw amino-acid sequence, 380 residues long: Queuine tRNA-ribosyltransferase (380 aa).

The Proton acceptor role is filled by D96. Residues 96-100 (DSGGF), D150, Q193, and G220 contribute to the substrate site. The tract at residues 251-257 (GVGAPDS) is RNA binding. D270 (nucleophile) is an active-site residue. The segment at 275–279 (TRIAR) is RNA binding; important for wobble base 34 recognition. Zn(2+) is bound by residues C308, C310, C313, and H339.

This sequence belongs to the queuine tRNA-ribosyltransferase family. In terms of assembly, homodimer. Within each dimer, one monomer is responsible for RNA recognition and catalysis, while the other monomer binds to the replacement base PreQ1. Zn(2+) serves as cofactor.

It catalyses the reaction 7-aminomethyl-7-carbaguanine + guanosine(34) in tRNA = 7-aminomethyl-7-carbaguanosine(34) in tRNA + guanine. Its pathway is tRNA modification; tRNA-queuosine biosynthesis. Functionally, catalyzes the base-exchange of a guanine (G) residue with the queuine precursor 7-aminomethyl-7-deazaguanine (PreQ1) at position 34 (anticodon wobble position) in tRNAs with GU(N) anticodons (tRNA-Asp, -Asn, -His and -Tyr). Catalysis occurs through a double-displacement mechanism. The nucleophile active site attacks the C1' of nucleotide 34 to detach the guanine base from the RNA, forming a covalent enzyme-RNA intermediate. The proton acceptor active site deprotonates the incoming PreQ1, allowing a nucleophilic attack on the C1' of the ribose to form the product. After dissociation, two additional enzymatic reactions on the tRNA convert PreQ1 to queuine (Q), resulting in the hypermodified nucleoside queuosine (7-(((4,5-cis-dihydroxy-2-cyclopenten-1-yl)amino)methyl)-7-deazaguanosine). This is Queuine tRNA-ribosyltransferase from Streptococcus pyogenes serotype M6 (strain ATCC BAA-946 / MGAS10394).